We begin with the raw amino-acid sequence, 476 residues long: Probable cytosol aminopeptidase (476 aa).

Mn(2+)-binding residues include lysine 242 and aspartate 247. Residue lysine 254 is part of the active site. Residues aspartate 265, aspartate 324, and glutamate 326 each coordinate Mn(2+). Arginine 328 is an active-site residue.

It belongs to the peptidase M17 family. Requires Mn(2+) as cofactor.

The protein localises to the cytoplasm. The catalysed reaction is Release of an N-terminal amino acid, Xaa-|-Yaa-, in which Xaa is preferably Leu, but may be other amino acids including Pro although not Arg or Lys, and Yaa may be Pro. Amino acid amides and methyl esters are also readily hydrolyzed, but rates on arylamides are exceedingly low.. It catalyses the reaction Release of an N-terminal amino acid, preferentially leucine, but not glutamic or aspartic acids.. In terms of biological role, presumably involved in the processing and regular turnover of intracellular proteins. Catalyzes the removal of unsubstituted N-terminal amino acids from various peptides. The polypeptide is Probable cytosol aminopeptidase (Treponema denticola (strain ATCC 35405 / DSM 14222 / CIP 103919 / JCM 8153 / KCTC 15104)).